Here is a 316-residue protein sequence, read N- to C-terminus: tRNA uridine(34) hydroxylase (316 aa).

The Rhodanese domain occupies L123–E217. Catalysis depends on C177, which acts as the Cysteine persulfide intermediate.

The protein belongs to the TrhO family.

The enzyme catalyses uridine(34) in tRNA + AH2 + O2 = 5-hydroxyuridine(34) in tRNA + A + H2O. Its function is as follows. Catalyzes oxygen-dependent 5-hydroxyuridine (ho5U) modification at position 34 in tRNAs. The polypeptide is tRNA uridine(34) hydroxylase (Staphylococcus saprophyticus subsp. saprophyticus (strain ATCC 15305 / DSM 20229 / NCIMB 8711 / NCTC 7292 / S-41)).